The sequence spans 96 residues: Large ribosomal subunit protein bL28 (96 aa).

Positions 1–22 are enriched in polar residues; it reads MSRSCELTGKGVQSGNNVSHAN. The tract at residues 1-24 is disordered; sequence MSRSCELTGKGVQSGNNVSHANNK.

It belongs to the bacterial ribosomal protein bL28 family.

The chain is Large ribosomal subunit protein bL28 from Sinorhizobium medicae (strain WSM419) (Ensifer medicae).